Here is a 280-residue protein sequence, read N- to C-terminus: ATP synthase gamma chain (280 aa).

This sequence belongs to the ATPase gamma chain family. In terms of assembly, F-type ATPases have 2 components, CF(1) - the catalytic core - and CF(0) - the membrane proton channel. CF(1) has five subunits: alpha(3), beta(3), gamma(1), delta(1), epsilon(1). CF(0) has three main subunits: a, b and c.

Its subcellular location is the cell membrane. In terms of biological role, produces ATP from ADP in the presence of a proton gradient across the membrane. The gamma chain is believed to be important in regulating ATPase activity and the flow of protons through the CF(0) complex. This chain is ATP synthase gamma chain, found in Mycoplasma capricolum subsp. capricolum (strain California kid / ATCC 27343 / NCTC 10154).